A 407-amino-acid polypeptide reads, in one-letter code: Tyrosine--tRNA ligase (407 aa).

Y36 contributes to the L-tyrosine binding site. The short motif at 41–50 (PTADSLHIGH) is the 'HIGH' region element. Residues Y169 and Q173 each coordinate L-tyrosine. The 'KMSKS' region motif lies at 229–233 (KMGKT). K232 contributes to the ATP binding site. The S4 RNA-binding domain maps to 341-407 (KGILDILVET…KKSYNRIVIE (67 aa)).

This sequence belongs to the class-I aminoacyl-tRNA synthetase family. TyrS type 1 subfamily. Homodimer.

It is found in the cytoplasm. It catalyses the reaction tRNA(Tyr) + L-tyrosine + ATP = L-tyrosyl-tRNA(Tyr) + AMP + diphosphate + H(+). Catalyzes the attachment of tyrosine to tRNA(Tyr) in a two-step reaction: tyrosine is first activated by ATP to form Tyr-AMP and then transferred to the acceptor end of tRNA(Tyr). In Clostridium tetani (strain Massachusetts / E88), this protein is Tyrosine--tRNA ligase.